The chain runs to 216 residues: Uracil phosphoribosyltransferase (216 aa).

30–34 (KNLVR) contributes to the GTP binding site. 5-phospho-alpha-D-ribose 1-diphosphate is bound by residues R80, R105, and 140–148 (DPMIATAST). Uracil contacts are provided by residues I203 and 208–210 (GDA). D209 provides a ligand contact to 5-phospho-alpha-D-ribose 1-diphosphate.

This sequence belongs to the UPRTase family. Requires Mg(2+) as cofactor.

The catalysed reaction is UMP + diphosphate = 5-phospho-alpha-D-ribose 1-diphosphate + uracil. The protein operates within pyrimidine metabolism; UMP biosynthesis via salvage pathway; UMP from uracil: step 1/1. With respect to regulation, allosterically activated by GTP. Its function is as follows. Catalyzes the conversion of uracil and 5-phospho-alpha-D-ribose 1-diphosphate (PRPP) to UMP and diphosphate. This chain is Uracil phosphoribosyltransferase, found in Saccharolobus islandicus (strain Y.N.15.51 / Yellowstone #2) (Sulfolobus islandicus).